A 660-amino-acid polypeptide reads, in one-letter code: MEHIRTPKVENVRLVDRVSPKKAALGTLYLTATHVIFVENSPGSRKETWILHSQISTIEKQATTATGCPLLIRCKNFQIIQLIIPQERDCHDVYISLIRLARPVKYGELYCFSFNPMLDKEEREQGWVLIDLSEEYKRMGLPNHYWQLSDVNRDYRVCDSYPTELYVPKSATAHIIVGSSKFRSRRRFPVLSYYYKDNHASICRSSQPLSGFSARCLEDEQMLQAIRKANPGSDFVYVVDTRPKLNAMANRAAGKGYENEDNYSNIKFQFIGIENIHVMRNSLQKMLEVCELKSPSMSDFLWGLENSGWLRHIKAIMDAGIFIAKAVSEEGTSVLVHCSDGWDRTAQVCSVASLLLDPHYRTLKGFMVLIEKDWISFGHKFNHRYGNLDGDPKEISPVIDQFIECVWQLMEQFPCAFEFNERFLIHIQHHIYSCQFGNFLCNSQKERQELKIQERTYSLWAHLWKNRADYLNPLFRADHSQTQGTLHLPTIPCNFMYKFWSGMYNRFEKGMQPRQSVTDYLMAVKEETQQLEEELEALEERLEKIQKVQLNCTKVKSKQSEPSKHSGFSTSDNSIANTPQDYSGNMKSFPSRSPSQGDEDSALILTQDNLKSSDPDLSANSDQESGVEDLSCRSPSGGEHAPSEDSGKDRDSDEAVFLTA.

The region spanning 126 to 504 is the Myotubularin phosphatase domain; sequence GWVLIDLSEE…FMYKFWSGMY (379 aa). Residues Asn250, Asn275, and Ile276 each coordinate a 1,2-diacyl-sn-glycero-3-phospho-(1D-myo-inositol-3-phosphate). Cys338 functions as the Phosphocysteine intermediate in the catalytic mechanism. 7 residues coordinate a 1,2-diacyl-sn-glycero-3-phospho-(1D-myo-inositol-3-phosphate): Ser339, Asp340, Gly341, Trp342, Asp343, Arg344, and Arg384. A coiled-coil region spans residues 514-558; sequence RQSVTDYLMAVKEETQQLEEELEALEERLEKIQKVQLNCTKVKSK. Residues 554–660 form a disordered region; the sequence is KVKSKQSEPS…DSDEAVFLTA (107 aa). Residues 566 to 596 are compositionally biased toward polar residues; sequence SGFSTSDNSIANTPQDYSGNMKSFPSRSPSQ. Thr578 is modified (phosphothreonine). Residues 641 to 653 show a composition bias toward basic and acidic residues; sequence APSEDSGKDRDSD.

Belongs to the protein-tyrosine phosphatase family. Non-receptor class myotubularin subfamily. As to quaternary structure, heterodimer (via C-terminus) with MTMR9 (via coiled coil domain); the interaction enhances MTMR7 catalytic activity. Does not homodimerize. Interacts with RAB1B (in GDP-bound form).

Its subcellular location is the cytoplasm. The protein resides in the endomembrane system. It carries out the reaction a 1,2-diacyl-sn-glycero-3-phospho-(1D-myo-inositol-3-phosphate) + H2O = a 1,2-diacyl-sn-glycero-3-phospho-(1D-myo-inositol) + phosphate. It catalyses the reaction 1D-myo-inositol 1,3-bisphosphate + H2O = 1D-myo-inositol 1-phosphate + phosphate. With respect to regulation, interaction with MTMR9 increases phosphatase activity. Functionally, lipid phosphatase that specifically dephosphorylates the D-3 position of phosphatidylinositol 3-phosphate (PtdIns(3)P) and inositol 1,3-bisphosphate (Ins(1,3)P2). The sequence is that of Phosphatidylinositol-3-phosphate phosphatase MTMR7 from Pongo abelii (Sumatran orangutan).